Reading from the N-terminus, the 383-residue chain is Sulfate adenylyltransferase (383 aa).

Belongs to the sulfate adenylyltransferase family.

The enzyme catalyses sulfate + ATP + H(+) = adenosine 5'-phosphosulfate + diphosphate. It participates in sulfur metabolism; hydrogen sulfide biosynthesis; sulfite from sulfate: step 1/3. This Aeropyrum pernix (strain ATCC 700893 / DSM 11879 / JCM 9820 / NBRC 100138 / K1) protein is Sulfate adenylyltransferase (sat).